The chain runs to 358 residues: DNA primase large subunit PriL (358 aa).

[4Fe-4S] cluster-binding residues include Cys234, Cys306, Cys315, and Cys322. Residues 335–358 form a disordered region; sequence KLDDTDEEELVDWREDEGEEEADA. The segment covering 338–358 has biased composition (acidic residues); that stretch reads DTDEEELVDWREDEGEEEADA.

Belongs to the eukaryotic-type primase large subunit family. In terms of assembly, heterodimer of a small subunit (PriS) and a large subunit (PriL). Requires [4Fe-4S] cluster as cofactor.

In terms of biological role, regulatory subunit of DNA primase, an RNA polymerase that catalyzes the synthesis of short RNA molecules used as primers for DNA polymerase during DNA replication. Stabilizes and modulates the activity of the small subunit, increasing the rate of DNA synthesis, and conferring RNA synthesis capability. The DNA polymerase activity may enable DNA primase to also catalyze primer extension after primer synthesis. May also play a role in DNA repair. The protein is DNA primase large subunit PriL of Haloarcula marismortui (strain ATCC 43049 / DSM 3752 / JCM 8966 / VKM B-1809) (Halobacterium marismortui).